Here is a 137-residue protein sequence, read N- to C-terminus: Small ribosomal subunit protein uS9 (137 aa).

Residues 100–137 (ENRPPLKSEGYLTRDPRAKERKKYGLHKARKAPQYSKR) form a disordered region. Positions 118-137 (KERKKYGLHKARKAPQYSKR) are enriched in basic residues.

The protein belongs to the universal ribosomal protein uS9 family.

This chain is Small ribosomal subunit protein uS9, found in Microcystis aeruginosa (strain NIES-843 / IAM M-2473).